The chain runs to 152 residues: 3-hydroxyacyl-[acyl-carrier-protein] dehydratase FabZ (152 aa).

His54 is an active-site residue.

This sequence belongs to the thioester dehydratase family. FabZ subfamily.

Its subcellular location is the cytoplasm. It carries out the reaction a (3R)-hydroxyacyl-[ACP] = a (2E)-enoyl-[ACP] + H2O. Its function is as follows. Involved in unsaturated fatty acids biosynthesis. Catalyzes the dehydration of short chain beta-hydroxyacyl-ACPs and long chain saturated and unsaturated beta-hydroxyacyl-ACPs. The polypeptide is 3-hydroxyacyl-[acyl-carrier-protein] dehydratase FabZ (Roseobacter denitrificans (strain ATCC 33942 / OCh 114) (Erythrobacter sp. (strain OCh 114))).